A 770-amino-acid chain; its full sequence is Metallothionein expression activator (770 aa).

Residues 77-97 (LVPSPKTGDGSSDKKNIDRTW) are disordered. Phosphoserine is present on residues S80, S122, S247, S249, and S253. T259 is modified (phosphothreonine). Residues 286 to 323 (PPPTLISPRMSNTSINGSPSRKYHRQRYPNKSPESNGL) are disordered. Residues 294–304 (RMSNTSINGSP) are compositionally biased toward polar residues. Phosphoserine occurs at positions 385, 392, and 483. 2 positions are modified to phosphothreonine: T486 and T501. Phosphoserine is present on S564. 2 consecutive C2H2-type zinc fingers follow at residues 603 to 627 (FECL…IQTH) and 633 to 657 (YSCD…KISH). Residues 662 to 685 (YICPCGKRFNREDALMVHRSRMIC) form a C2H2-type 3; atypical zinc finger. Positions 699–770 (LTSPKKSLLD…RTLSNETDAL (72 aa)) are disordered. Residues 705 to 745 (SLLDSPHDTSPVKETIARDKDGSVLMKMEEQLRDDMRKHGL) show a composition bias toward basic and acidic residues. Phosphoserine occurs at positions 709 and 714. A compositionally biased stretch (polar residues) spans 754–770 (AHEQNSNRTLSNETDAL).

It localises to the nucleus. In terms of biological role, plays a role in regulating basal-level expression of CUP1. Activates EGT2 transcription in the absence of SWI5. In Saccharomyces cerevisiae (strain ATCC 204508 / S288c) (Baker's yeast), this protein is Metallothionein expression activator (ACE2).